Reading from the N-terminus, the 45-residue chain is uncharacterized protein (45 aa).

Residues 5–25 (IFFIFALSGILAACTVGGGVS) traverse the membrane as a helical segment.

It is found in the membrane. This is an uncharacterized protein from Haemophilus influenzae (strain ATCC 51907 / DSM 11121 / KW20 / Rd).